Reading from the N-terminus, the 542-residue chain is Cytochrome P450 monooxygenase TRI1 (542 aa).

Residues 37-54 form a helical membrane-spanning segment; sequence LIYFLCFVVLGRAVQWFL. Residues Asn167, Asn297, and Asn428 are each glycosylated (N-linked (GlcNAc...) asparagine). Heme is bound at residue Cys469.

Belongs to the cytochrome P450 family. Heme is required as a cofactor.

The protein localises to the membrane. It participates in sesquiterpene biosynthesis; trichothecene biosynthesis. Its function is as follows. Cytochrome P450 monooxygenase; part of 2-gene cluster involved in trichothecene C-8 modification that mediates the biosynthesis of T2-toxin. The biosynthesis of trichothecenes begins with the cyclization of farnesyl diphosphate to trichodiene and is catalyzed by the trichodiene synthase TRI5. Trichodiene undergoes a series of oxygenations catalyzed by the cytochrome P450 monooxygenase TRI4. TRI4 controls the addition of four oxygens at C-2, C-3, C-11, and the C-12, C-13-epoxide to form the intermediate isotrichotriol. Isotrichotriol then undergoes a non-enzymatic isomerization and cyclization to form isotrichodermol. During this process, the oxygen at the C-2 position becomes the pyran ring oxygen and the hydroxyl group at C-11 is lost. More complex type A trichothecenes are built by modifying isotrichodermol through a series of paired hydroxylation and acetylation or acylation steps. Isotrichodermol is converted to isotrichodermin by the acetyltransferase TRI101. TRI101 encodes a C-3 transacetylase that acts as a self-protection or resistance factor during biosynthesis and that the presence of a free C-3 hydroxyl group is a key component of Fusarium trichothecene phytotoxicity. A second hydroxyl group is added to C-15 by the trichothecene C-15 hydroxylase TRI11, producing 15-decalonectrin, which is then acetylated by TRI3, producing calonectrin. A third hydroxyl group is added at C-4 by the cytochrome P450 monooxygenase TRI13, converting calonectrin to 3,15-diacetoxyspirpenol, which is subsequently acetylated by the acetyltransferase TRI7. A fourth hydroxyl group is added to C-8 by the cytochrome P450 monooxygenase TRI1, followed by the addition of an isovaleryl moiety by TRI16. Finally, the acetyl group is removed from the C-3 position by the trichothecene C-3 esterase TRI8 to produce T-2 toxin. This is Cytochrome P450 monooxygenase TRI1 from Fusarium sporotrichioides.